The chain runs to 178 residues: Large ribosomal subunit protein uL6 (178 aa).

The protein belongs to the universal ribosomal protein uL6 family. In terms of assembly, part of the 50S ribosomal subunit.

Functionally, this protein binds to the 23S rRNA, and is important in its secondary structure. It is located near the subunit interface in the base of the L7/L12 stalk, and near the tRNA binding site of the peptidyltransferase center. This is Large ribosomal subunit protein uL6 from Thermoplasma volcanium (strain ATCC 51530 / DSM 4299 / JCM 9571 / NBRC 15438 / GSS1).